We begin with the raw amino-acid sequence, 395 residues long: N5-carboxyaminoimidazole ribonucleotide synthase (395 aa).

Residues Lys109, Lys149, 184-187, Glu192, and 268-269 each bind ATP; these read EEFI and NE. Residues 113-298 form the ATP-grasp domain; sequence RQLLTRLGLP…QFEQQLRAIA (186 aa).

Belongs to the PurK/PurT family. In terms of assembly, homodimer.

The enzyme catalyses 5-amino-1-(5-phospho-beta-D-ribosyl)imidazole + hydrogencarbonate + ATP = 5-carboxyamino-1-(5-phospho-D-ribosyl)imidazole + ADP + phosphate + 2 H(+). Its pathway is purine metabolism; IMP biosynthesis via de novo pathway; 5-amino-1-(5-phospho-D-ribosyl)imidazole-4-carboxylate from 5-amino-1-(5-phospho-D-ribosyl)imidazole (N5-CAIR route): step 1/2. In terms of biological role, catalyzes the ATP-dependent conversion of 5-aminoimidazole ribonucleotide (AIR) and HCO(3)(-) to N5-carboxyaminoimidazole ribonucleotide (N5-CAIR). In Synechococcus elongatus (strain ATCC 33912 / PCC 7942 / FACHB-805) (Anacystis nidulans R2), this protein is N5-carboxyaminoimidazole ribonucleotide synthase.